Here is a 76-residue protein sequence, read N- to C-terminus: Large ribosomal subunit protein eL29 (76 aa).

The span at 1–29 (MAKSKNHTNHNQNKKAHRNGIKRPLRKRH) shows a compositional bias: basic residues. 2 disordered regions span residues 1–33 (MAKSKNHTNHNQNKKAHRNGIKRPLRKRHESTL) and 47–76 (RKGNLSREESVKRYNERIASQKGKPKPVTL). Ser-31 carries the phosphoserine modification. A compositionally biased stretch (basic and acidic residues) spans 51–62 (LSREESVKRYNE).

The protein belongs to the eukaryotic ribosomal protein eL29 family.

This is Large ribosomal subunit protein eL29 (RpL29) from Drosophila melanogaster (Fruit fly).